Consider the following 76-residue polypeptide: Exodeoxyribonuclease 7 small subunit (76 aa).

Belongs to the XseB family. Heterooligomer composed of large and small subunits.

The protein localises to the cytoplasm. It catalyses the reaction Exonucleolytic cleavage in either 5'- to 3'- or 3'- to 5'-direction to yield nucleoside 5'-phosphates.. Bidirectionally degrades single-stranded DNA into large acid-insoluble oligonucleotides, which are then degraded further into small acid-soluble oligonucleotides. The polypeptide is Exodeoxyribonuclease 7 small subunit (Staphylococcus aureus (strain MRSA252)).